A 239-amino-acid polypeptide reads, in one-letter code: Probable transcriptional regulatory protein ABO_1803 (239 aa).

The protein belongs to the TACO1 family.

Its subcellular location is the cytoplasm. The polypeptide is Probable transcriptional regulatory protein ABO_1803 (Alcanivorax borkumensis (strain ATCC 700651 / DSM 11573 / NCIMB 13689 / SK2)).